The chain runs to 354 residues: UDP-N-acetylglucosamine--N-acetylmuramyl-(pentapeptide) pyrophosphoryl-undecaprenol N-acetylglucosamine transferase (354 aa).

Residues 11-13 (TAG), Arg-164, Ser-194, and Gln-289 each bind UDP-N-acetyl-alpha-D-glucosamine.

The protein belongs to the glycosyltransferase 28 family. MurG subfamily.

The protein resides in the cell membrane. It carries out the reaction di-trans,octa-cis-undecaprenyl diphospho-N-acetyl-alpha-D-muramoyl-L-alanyl-D-glutamyl-meso-2,6-diaminopimeloyl-D-alanyl-D-alanine + UDP-N-acetyl-alpha-D-glucosamine = di-trans,octa-cis-undecaprenyl diphospho-[N-acetyl-alpha-D-glucosaminyl-(1-&gt;4)]-N-acetyl-alpha-D-muramoyl-L-alanyl-D-glutamyl-meso-2,6-diaminopimeloyl-D-alanyl-D-alanine + UDP + H(+). It functions in the pathway cell wall biogenesis; peptidoglycan biosynthesis. In terms of biological role, cell wall formation. Catalyzes the transfer of a GlcNAc subunit on undecaprenyl-pyrophosphoryl-MurNAc-pentapeptide (lipid intermediate I) to form undecaprenyl-pyrophosphoryl-MurNAc-(pentapeptide)GlcNAc (lipid intermediate II). This Clostridium botulinum (strain Kyoto / Type A2) protein is UDP-N-acetylglucosamine--N-acetylmuramyl-(pentapeptide) pyrophosphoryl-undecaprenol N-acetylglucosamine transferase.